The following is a 145-amino-acid chain: Peptide methionine sulfoxide reductase MsrB (145 aa).

One can recognise a MsrB domain in the interval 4 to 127 (SDELKQRIGD…NSAALKFIPY (124 aa)). Residue cysteine 116 is the Nucleophile of the active site.

The protein belongs to the MsrB Met sulfoxide reductase family.

The catalysed reaction is L-methionyl-[protein] + [thioredoxin]-disulfide + H2O = L-methionyl-(R)-S-oxide-[protein] + [thioredoxin]-dithiol. In Streptococcus pyogenes serotype M18 (strain MGAS8232), this protein is Peptide methionine sulfoxide reductase MsrB.